The following is a 404-amino-acid chain: O-antigen ligase (404 aa).

A run of 11 helical transmembrane segments spans residues 16–32, 39–55, 67–84, 96–115, 127–147, 168–183, 189–221, 228–246, 324–343, 363–379, and 385–401; these read IWNK…YFLD, HLII…QVSR, SVFY…YSIL, FENT…PVLL, VLFS…ILYI, SMVF…WLFR, LVFL…GVLW, WKLI…ALVI, ILYI…VYLY, YNAH…FYIV, and QVDI…LLAL.

It belongs to the O-antigen ligase family.

Its subcellular location is the cell inner membrane. The catalysed reaction is a lipid-linked O antigen + a lipid A-core oligosaccharide = a lipopolysaccharide + a polyisoprenyl diphosphate.. Its pathway is bacterial outer membrane biogenesis; lipopolysaccharide biosynthesis. Its function is as follows. Transferase involved in the biosynthesis of the lipopolysaccharide (LPS). Catalyzes the transfer of a polymerized O-antigen molecule from its polyprenyl diphosphate membrane anchor to a terminal sugar of the lipid A-core oligosaccharide, finalizing the biosynthesis of the lipopolysaccharide. May also be involved in a feedback mechanism to regulate O-unit synthesis, based on the availability of O units on the periplasmic face of the membrane. In Salmonella typhimurium (strain LT2 / SGSC1412 / ATCC 700720), this protein is O-antigen ligase.